The sequence spans 398 residues: Type II secretion system protein L (398 aa).

Over 1 to 248 (MNNHHTSSAA…RQPTPRRWRP (248 aa)) the chain is Cytoplasmic. Residues 249-265 (VIVAALALLLLWSSNCL) traverse the membrane as a helical segment. The Periplasmic segment spans residues 266–398 (HDHLMLGQQA…GRLTLEGNDA (133 aa)).

Belongs to the GSP L family. In terms of assembly, type II secretion system is composed of four main components: the outer membrane complex, the inner membrane complex, the cytoplasmic secretion ATPase and the periplasm-spanning pseudopilus. Forms homodimers. Interacts with PulM/GspM. Interacts with PulE/GspE and PulF/GspF.

It is found in the cell inner membrane. Inner membrane component of the type II secretion system required for the energy-dependent secretion of extracellular factors such as proteases and toxins from the periplasm. Plays a role in the complex assembly and recruits PulM resulting in a stable complex in the inner membrane. Provides thus a link between the energy-providing PulE protein in the cytoplasm and the rest of the T2SS machinery. This Klebsiella pneumoniae protein is Type II secretion system protein L (pulL).